We begin with the raw amino-acid sequence, 988 residues long: Putative disease resistance protein RGA4 (988 aa).

Residues 137–439 enclose the NB-ARC domain; it reads AAAATRETGF…MAHGFLLSKG (303 aa). ATP is bound at residue 184 to 191; that stretch reads GMGGLGKT. LRR repeat units lie at residues 526–548, 549–572, 574–595, 596–620, 638–662, 674–696, 751–776, 784–808, 829–851, 852–876, 878–900, 901–925, 927–950, and 966–988; these read FVSL…SIGD, LLHL…LCKL, NLQT…QTSK, LSSL…GLLT, LGEL…KNDT, LQSL…EVKV, LPCL…DVHS, FPSL…EGEE, LSSV…SISN, LSTL…MFTS, TNLE…SLTS, LNAL…GLEG, TSLT…LQHL, and KRCD…LDIH.

Belongs to the disease resistance NB-LRR family.

Its function is as follows. Disease resistance protein. Resistance proteins guard the plant against pathogens that contain an appropriate avirulence protein via a direct or indirect interaction with this avirulence protein. That triggers a defense system which restricts the pathogen growth. This is Putative disease resistance protein RGA4 (RGA4) from Solanum bulbocastanum (Wild potato).